The following is a 515-amino-acid chain: Mucin-like protein Glc1.8a (515 aa).

The first 20 residues, 1-20 (MSQITLIILILAIGFSCTKS), serve as a signal peptide directing secretion. Residues 21–467 (HPINSTRDGE…ANDIKKPAFP (447 aa)) are Extracellular-facing. Asn24, Asn45, Asn51, Asn60, Asn85, Asn93, Asn102, Asn123, Asn129, Asn138, Asn180, Asn201, Asn207, Asn216, Asn258, Asn279, Asn285, Asn319, Asn327, Asn336, Asn357, Asn363, Asn372, Asn397, Asn405, Asn413, Asn434, and Asn441 each carry an N-linked (GlcNAc...) asparagine; by host glycan. The disordered stretch occupies residues 80–114 (SKKDENITGQSEINTSAKSQPINSTRDGEDSGTDL). Polar residues predominate over residues 86-104 (ITGQSEINTSAKSQPINST). Positions 314-358 (SKKDENVTGQSEINTSAKSQPINSTRDGEDSGTDLKNLLTDPANT) are disordered. The segment covering 320 to 338 (VTGQSEINTSAKSQPINST) has biased composition (polar residues). Residues 393-413 (RKDENVTGQSEFNISTNSNLN) form a disordered region. Residues 468-488 (YCIILITFQIVTVGMIIYLVF) traverse the membrane as a helical segment. Residues 489-515 (RTMRKPCQSERAIPLNTFGFGNNSSHE) are Cytoplasmic-facing.

Belongs to the polydnaviridae Glc1.8 protein family.

The protein localises to the host membrane. Functionally, involved in suppression of the insect cellular immune response. Inhibits host hemocyte adhesion and phagocytosis. This chain is Mucin-like protein Glc1.8a (O9), found in Microplitis demolitor (Parasitoid wasp).